Consider the following 134-residue polypeptide: T-cell receptor beta chain V region CTL-F3 (134 aa).

The first 19 residues, 1 to 19 (MAPRLLFCLVLCFLRAEPT), serve as a signal peptide directing secretion. The interval 20-115 (NAGVIQTPRH…SAVYLCASSL (96 aa)) is v segment. Cys42 and Cys111 are oxidised to a cystine. Residue Asn90 is glycosylated (N-linked (GlcNAc...) asparagine). Residues 116-119 (STGV) form a d segment region. The segment at 120 to 134 (SYEQYFGPGTRLTVL) is j segment.

The sequence is that of T-cell receptor beta chain V region CTL-F3 from Mus musculus (Mouse).